The primary structure comprises 323 residues: tRNA U34 carboxymethyltransferase (323 aa).

Carboxy-S-adenosyl-L-methionine is bound by residues Lys91, Trp105, Lys110, Gly130, Asp152–Thr154, Ile181–Glu182, Met196, Tyr200, and Arg315.

It belongs to the class I-like SAM-binding methyltransferase superfamily. CmoB family. Homotetramer.

It carries out the reaction carboxy-S-adenosyl-L-methionine + 5-hydroxyuridine(34) in tRNA = 5-carboxymethoxyuridine(34) in tRNA + S-adenosyl-L-homocysteine + H(+). Its function is as follows. Catalyzes carboxymethyl transfer from carboxy-S-adenosyl-L-methionine (Cx-SAM) to 5-hydroxyuridine (ho5U) to form 5-carboxymethoxyuridine (cmo5U) at position 34 in tRNAs. This is tRNA U34 carboxymethyltransferase from Salmonella typhimurium (strain LT2 / SGSC1412 / ATCC 700720).